Reading from the N-terminus, the 1925-residue chain is MMETQPTSLPHVLPQDVYEFCDDRKSLGRLRVSEMPAESNGDGGGSKGDGAAVVAKEVPEQSNKKRKRCGVCVPCLRKEPCGACYNCVNRSTSHQICKMRKCEQLKKKRVVPLKGVEAVNKDDSKNQAKEQVPNVKNCSESILVDGPKTDQMEAGPVNHVQEGRLKKECDSTLPSKACEDLANQLLMEANSWLSNTAAPQDPCNKLNWDKPTIPNHTAATNNSNLEDAKNLVAFSAVAEAMSNYGMPASGTPSSVSMQLYEKFNYETNRDSSGHPEGNAPSCPEDLNTLKTALALAKHGVKPPNCNCDGPECPDYLEWLENKIKSSQKDSQESSFPGLGQVSKELVQKSYPKEEVLNLENKNLCPSGNLPFSQNALSLAKEKNISLQTAIAIEALTQLSSALPQTNNECPNSSSQPLINTCDQLTHFPTAKGNQLPIFPMACNELFQNQQSQLYTGKNALPVPQSPRQTSWEQNKKPSYQEGQYIPENLSQSSSVLPSDASTPQKTEFLQQWIQNADLLKSPSDPMTGLKQLLGNTDEYIKSVFKGPEALPNKIKHVKTKRTIKSIKKKSSDFLKMSPDQQLSQLLQENDFHHNAQAALQQHLHHKRNLFVDPNTMEACAQEQQNWWVPKSQKLPVSKTTENPVKERKKRRQRSPSQKQVEPKPKPPRKQVQIKKPRMKEGNAVFMPVSQISLDAFRGAEKEENQLKEMNLEKSLSNNIQPDLLESQSILVTGSQANIENRKTVNTQETCNENQASNGKASNFALCVNQANSLGAKDSCPTPSTDDASSSSGQGDSANQHTNVGDVPGQNDLSCLDDKFEDLLRQFEAEFGEDFSLPGSEAPSQNGVGPPKQQISGDPQFKMPFPSQLLPSENSTRPDAHSNPALSNNPISHNVSHNLDSLFSSKSPKKIKIESSGAITVVSTTCFYSEENQHLDGTPTKSDLPFNPTLSGFLESPLKYLTSPTKSLIDTPAKMAQAEFPTCDCVEQINEKDEGPYYTHLGSGPTVASIRELMEDRFGEKGEAIRIEKVIYTGKEGKSSRGCPIAKWVIRRQSEDEKLMCLVRQRAGHHCENAVIIILIMAWEGIPRALGDSLYSDITETITKYGNPTSRRCGLNDDRTCACQGKDPNTCGASFSFGCSWSMYFNGCKYARSKTPRKFRLIGDNPKEEEFLNDNFQDLATKVAPVYQMLAPQSYENQVNNEEVAIDCRLGLKEGRPFSGVTACMDFCAHAHKDQHNLYNGCTVVCTLTKEDNRTIGRIPEDEQLHVLPLYKVSSTDEFGSEDGQAEKIRKGGIQVLASFPREVRKLSEPAKSCRQRQLDAKKAAAEKKKLQKEKLVSPDKTKQEPADTKMCQQNPGVPQQQTKPCVKVEPSNHYNTYKYNGNGVVESYSVLGSCRPSDPYSMNSVYSYHSFYAQPNLPSVNGFHSKFALPPFGFYGFPNNPVVPNQFMNYGTSDARNSGWMNNSFEKKPDVQSLADGMNQSYGSELPEQSYRRSSEVPHHYSLQNPNSQKSFNISHRTTPSPMETTPYSNLPCYNKVIKKEPVCDPLVDPFQRANSVHSQSPGVNHSLQTSDLPFKANGALPSSGRSNAEGPCSMSLPNDKSGLEKRDYFGVHSNVPALKDKQWTPYGTDVPVGQRDSLDAQSPGKVWSSCKLSDSPAVLPSFASTQTKNWNGRQASLNQGLKEPMPFQEKLWNSVAASDRCSVTPSDRSSVTPCAELQDKNWASFPNPVGNSLKTESSQNHWDPYSLDDNMDDGQSKSVKEEEDEEEIWSDSEHNFLDKNIGGVAVAPGHGSILIECARRELHATTPLKKPNRCHPARISLVFYQHKNLNQPNHGLALWEAKMKLLAERARVKEEEAARLGIKQEVKSLGKKRKWGGAATTETPPVEKKDFIPTRQATTILTDSATTAFSYAYTKVTGPYSRFI.

Residues 62–103 form a CXXC-type zinc finger; that stretch reads SNKKRKRCGVCVPCLRKEPCGACYNCVNRSTSHQICKMRKCE. Cys-69, Cys-72, Cys-75, Cys-81, Cys-84, Cys-87, Cys-97, and Cys-102 together coordinate Zn(2+). Disordered stretches follow at residues 457 to 476, 630 to 685, 774 to 812, and 833 to 892; these read KNALPVPQSPRQTSWEQNKK, KSQK…NAVF, GAKDSCPTPSTDDASSSSGQGDSANQHTNVGDVPGQNDL, and DFSL…PISH. Residues 465-476 are compositionally biased toward polar residues; the sequence is SPRQTSWEQNKK. The span at 665-677 shows a compositional bias: basic residues; that stretch reads KPPRKQVQIKKPR. The span at 777–797 shows a compositional bias: low complexity; the sequence is DSCPTPSTDDASSSSGQGDSA. 2 stretches are compositionally biased toward polar residues: residues 841–856 and 883–892; these read APSQNGVGPPKQQISG and PALSNNPISH. Zn(2+)-binding residues include Cys-982, Cys-984, Cys-1042, His-1068, and Cys-1070. Residue Arg-1110 coordinates 2-oxoglutarate. The Zn(2+) site is built by Cys-1120, Cys-1122, Cys-1138, Cys-1147, and Cys-1207. Position 1223 (Cys-1223) interacts with 2-oxoglutarate. His-1229 lines the Zn(2+) pocket. His-1231 and Asp-1233 together coordinate Fe cation. His-1265 lines the 2-oxoglutarate pocket. 4 disordered regions span residues 1307–1364, 1474–1513, 1556–1600, and 1722–1769; these read SEPA…QTKP, LADGMNQSYGSELPEQSYRRSSEVPHHYSLQNPNSQKSFN, SVHS…LPND, and NWAS…EEEI. A compositionally biased stretch (basic and acidic residues) spans 1316–1347; that stretch reads RQLDAKKAAAEKKKLQKEKLVSPDKTKQEPAD. The span at 1350–1363 shows a compositional bias: polar residues; that stretch reads MCQQNPGVPQQQTK. Basic and acidic residues predominate over residues 1490–1499; the sequence is SYRRSSEVPH. 3 stretches are compositionally biased toward polar residues: residues 1502-1513, 1556-1572, and 1730-1742; these read SLQNPNSQKSFN, SVHSQSPGVNHSLQTSD, and VGNSLKTESSQNH. His-1804 is a binding site for Fe cation. Position 1819–1821 (1819–1821) interacts with 2-oxoglutarate; that stretch reads RIS. Residues 1837–1870 adopt a coiled-coil conformation; sequence LALWEAKMKLLAERARVKEEEAARLGIKQEVKSL.

The protein belongs to the TET family. The cofactor is Fe(2+). Requires Zn(2+) as cofactor. In terms of tissue distribution, detected in embryo (at protein level). Detected in embryonic head, in developing brain, neural tube and eye.

Its subcellular location is the nucleus. It is found in the chromosome. The enzyme catalyses a 5-methyl-2'-deoxycytidine in DNA + 2-oxoglutarate + O2 = a 5-hydroxymethyl-2'-deoxycytidine in DNA + succinate + CO2. The catalysed reaction is a 5-hydroxymethyl-2'-deoxycytidine in DNA + 2-oxoglutarate + O2 = a 5-formyl-2'-deoxycytidine in DNA + succinate + CO2 + H2O. It catalyses the reaction a 5-formyl-2'-deoxycytidine in DNA + 2-oxoglutarate + O2 = a 5-carboxyl-2'-deoxycytidine in DNA + succinate + CO2 + H(+). In terms of biological role, dioxygenase that catalyzes the conversion of the modified genomic base 5-methylcytosine (5mC) into 5-hydroxymethylcytosine (5hmC) and plays a key role in epigenetic chromatin reprogramming during embryonic development. Conversion of 5mC into 5hmC probably constitutes the first step in cytosine demethylation. Selectively binds to the promoter region of target genes and contributes to regulate the expression of numerous developmental genes, including pax6, rax, sox9 and six3. May also contribute to the regulation of target genes in ways that do not require its enzyme activity. This chain is Methylcytosine dioxygenase tet3-A, found in Xenopus laevis (African clawed frog).